Here is a 959-residue protein sequence, read N- to C-terminus: Isoleucine--tRNA ligase (959 aa).

Positions 60 to 70 (PYANGSLHMGH) match the 'HIGH' region motif. Residue Glu569 participates in L-isoleucyl-5'-AMP binding. The 'KMSKS' region motif lies at 610–614 (KMSKS). An ATP-binding site is contributed by Lys613. Zn(2+)-binding residues include Cys928, Cys931, Cys948, and Cys951.

Belongs to the class-I aminoacyl-tRNA synthetase family. IleS type 1 subfamily. Monomer. It depends on Zn(2+) as a cofactor.

The protein resides in the cytoplasm. The catalysed reaction is tRNA(Ile) + L-isoleucine + ATP = L-isoleucyl-tRNA(Ile) + AMP + diphosphate. Functionally, catalyzes the attachment of isoleucine to tRNA(Ile). As IleRS can inadvertently accommodate and process structurally similar amino acids such as valine, to avoid such errors it has two additional distinct tRNA(Ile)-dependent editing activities. One activity is designated as 'pretransfer' editing and involves the hydrolysis of activated Val-AMP. The other activity is designated 'posttransfer' editing and involves deacylation of mischarged Val-tRNA(Ile). This Gloeothece citriformis (strain PCC 7424) (Cyanothece sp. (strain PCC 7424)) protein is Isoleucine--tRNA ligase.